The primary structure comprises 273 residues: 4-hydroxy-tetrahydrodipicolinate reductase (273 aa).

NAD(+) contacts are provided by residues Gly12 to Met17 and Glu38. Residue Arg39 participates in NADP(+) binding. NAD(+)-binding positions include Gly102–Thr104 and Ala126–Phe129. His159 serves as the catalytic Proton donor/acceptor. His160 is a (S)-2,3,4,5-tetrahydrodipicolinate binding site. Lys163 acts as the Proton donor in catalysis. Gly169–Thr170 contacts (S)-2,3,4,5-tetrahydrodipicolinate.

It belongs to the DapB family. In terms of assembly, homotetramer.

Its subcellular location is the cytoplasm. It catalyses the reaction (S)-2,3,4,5-tetrahydrodipicolinate + NAD(+) + H2O = (2S,4S)-4-hydroxy-2,3,4,5-tetrahydrodipicolinate + NADH + H(+). It carries out the reaction (S)-2,3,4,5-tetrahydrodipicolinate + NADP(+) + H2O = (2S,4S)-4-hydroxy-2,3,4,5-tetrahydrodipicolinate + NADPH + H(+). Its pathway is amino-acid biosynthesis; L-lysine biosynthesis via DAP pathway; (S)-tetrahydrodipicolinate from L-aspartate: step 4/4. In terms of biological role, catalyzes the conversion of 4-hydroxy-tetrahydrodipicolinate (HTPA) to tetrahydrodipicolinate. This Salmonella arizonae (strain ATCC BAA-731 / CDC346-86 / RSK2980) protein is 4-hydroxy-tetrahydrodipicolinate reductase.